Here is a 480-residue protein sequence, read N- to C-terminus: Phosphomethylpyrimidine synthase (480 aa).

Residues Asn66, Met95, Tyr124, His159, Ser179–Gly181, Asp220–Arg223, and Glu259 contribute to the substrate site. His263 contacts Zn(2+). Tyr286 is a substrate binding site. His327 lines the Zn(2+) pocket. The [4Fe-4S] cluster site is built by Cys407, Cys410, and Cys415. The segment at Asp426–Asp480 is disordered. The segment covering Met470–Asp480 has biased composition (acidic residues).

It belongs to the ThiC family. The cofactor is [4Fe-4S] cluster.

The enzyme catalyses 5-amino-1-(5-phospho-beta-D-ribosyl)imidazole + S-adenosyl-L-methionine = 4-amino-2-methyl-5-(phosphooxymethyl)pyrimidine + CO + 5'-deoxyadenosine + formate + L-methionine + 3 H(+). The protein operates within cofactor biosynthesis; thiamine diphosphate biosynthesis. Catalyzes the synthesis of the hydroxymethylpyrimidine phosphate (HMP-P) moiety of thiamine from aminoimidazole ribotide (AIR) in a radical S-adenosyl-L-methionine (SAM)-dependent reaction. The sequence is that of Phosphomethylpyrimidine synthase from Haloarcula marismortui (strain ATCC 43049 / DSM 3752 / JCM 8966 / VKM B-1809) (Halobacterium marismortui).